We begin with the raw amino-acid sequence, 408 residues long: MSDIKKVVLAYSGGLDTSVILKWLQDNYDAEVVTFTADIGQGEELEPARKKALQLGIKQDNIFIEDLREEFVRDFVFPMFRANTIYEGEYLLGTSIARPLIAKRQIEIARATGAQAVSHGATGKGNDQVRFELGYYALEPGIKVIAPWREWDLLSREKLLAYAEKAGIPIEMKHKQGGAPYSMDANLLHISFEGRHLEDPKAEAEADMWRWTVSPEQAPDQAEYIDIEYEHGDPVAINGKRLSAAEMLTELNRLGGKHGIGRLDLVENRYVGMKSRGCYETPGGTIMLKAHRGIESITLDREVAHLKDDLMARYASLIYNGYWWSPERRAIQVLIDHTQEKVNGWVRVKLYKGSVSVVARDSKETLFDKTIATFDDDGGAYNQADAGGFIKLNALRMRIAENARRQRG.

Residues 10 to 18 (AYSGGLDTS) and Ala37 contribute to the ATP site. L-citrulline is bound by residues Tyr90 and Ser95. Gly120 is an ATP binding site. Positions 122, 126, and 127 each coordinate L-aspartate. Asn126 is an L-citrulline binding site. L-citrulline-binding residues include Arg130, Ser182, Ser191, Glu267, and Tyr279.

The protein belongs to the argininosuccinate synthase family. Type 1 subfamily. Homotetramer.

It localises to the cytoplasm. It catalyses the reaction L-citrulline + L-aspartate + ATP = 2-(N(omega)-L-arginino)succinate + AMP + diphosphate + H(+). Its pathway is amino-acid biosynthesis; L-arginine biosynthesis; L-arginine from L-ornithine and carbamoyl phosphate: step 2/3. In Paraburkholderia phytofirmans (strain DSM 17436 / LMG 22146 / PsJN) (Burkholderia phytofirmans), this protein is Argininosuccinate synthase.